The chain runs to 441 residues: GTPase Der (441 aa).

2 consecutive EngA-type G domains span residues 3 to 167 (PLIA…PKGS) and 176 to 351 (TKIA…EQFA). GTP-binding positions include 9-16 (GRPNVGKS), 56-60 (DTGGF), 119-122 (NKID), 182-189 (GRPNVGKS), 229-233 (DTAGI), and 294-297 (NKWD). A KH-like domain is found at 352–436 (RRITTSDLNR…PMRLLFKGRE (85 aa)).

Belongs to the TRAFAC class TrmE-Era-EngA-EngB-Septin-like GTPase superfamily. EngA (Der) GTPase family. In terms of assembly, associates with the 50S ribosomal subunit.

Functionally, GTPase that plays an essential role in the late steps of ribosome biogenesis. This Geotalea uraniireducens (strain Rf4) (Geobacter uraniireducens) protein is GTPase Der.